The chain runs to 130 residues: MKGLLARMHQQWQNLFPSAPSKGQHFEQLAERWLQARGLQPVTRNYRCRGGEIDLIMRQGETLVFVEVRYRSQTSHGGAAASVTRCKQHKIVLAARHYFKQHAINEASQACRFDVIAFEGDQPDWIQNAF.

It belongs to the UPF0102 family.

This is UPF0102 protein AHA_3896 from Aeromonas hydrophila subsp. hydrophila (strain ATCC 7966 / DSM 30187 / BCRC 13018 / CCUG 14551 / JCM 1027 / KCTC 2358 / NCIMB 9240 / NCTC 8049).